A 291-amino-acid polypeptide reads, in one-letter code: Omega-amidase NIT3 (291 aa).

The region spanning 11–264 (IKVALVQLSG…EEIIYAELDP (254 aa)) is the CN hydrolase domain. Threonine 34 is modified (phosphothreonine). The active-site Proton acceptor is glutamate 53. The Proton donor role is filled by lysine 128. The Nucleophile role is filled by cysteine 169.

It belongs to the carbon-nitrogen hydrolase superfamily. NIT1/NIT2 family. Homodimer.

It catalyses the reaction a monoamide of a dicarboxylate + H2O = a dicarboxylate + NH4(+). In terms of biological role, possesses omega-amidase activity. The role of omega-amidase is to remove potentially toxic intermediates by converting 2-oxoglutaramate and 2-oxosuccinamate to biologically useful 2-oxoglutarate and oxaloacetate, respectively. This Saccharomyces cerevisiae (strain ATCC 204508 / S288c) (Baker's yeast) protein is Omega-amidase NIT3 (NIT3).